Reading from the N-terminus, the 591-residue chain is Lysyl oxidase homolog 1 (591 aa).

The signal sequence occupies residues 1–22 (MALALTGWQLVWGACVCVLVHG). A propeptide spanning residues 23 to 91 (QQAPPGQGSD…PRRRGGLRRR (69 aa)) is cleaved from the precursor. Disordered regions lie at residues 77-107 (APQA…SDTV) and 233-373 (EYGG…RLSV). Residues 82–92 (PRRRGGLRRRQ) show a composition bias toward basic residues. The segment covering 298-313 (NGGGGGGTYGGGGGDP) has biased composition (gly residues). Positions 319-386 (PPYGNMPPEA…YRPNQNGRGL (68 aa)) are interaction with FBLN5. Positions 387-591 (PDLVPDPNYV…STTNCKIVQS (205 aa)) are lysyl-oxidase like. 5 disulfides stabilise this stretch: Cys412-Cys418, Cys465-Cys514, Cys498-Cys504, Cys525-Cys535, and Cys572-Cys586. Residues His466, His468, and His470 each contribute to the Cu cation site. A cross-link (lysine tyrosylquinone (Lys-Tyr)) is located at residues 494 to 529 (KASFCLEDSTCDFGNLKRYACTSHTQGLSPGCYDTY). At Tyr529 the chain carries 2',4',5'-topaquinone.

Belongs to the lysyl oxidase family. Interacts (via propeptide) with EFEMP2. Interacts with FBLN5. It depends on Cu cation as a cofactor. Requires lysine tyrosylquinone residue as cofactor. Post-translationally, the lysine tyrosylquinone cross-link (LTQ) is generated by condensation of the epsilon-amino group of a lysine with a topaquinone produced by oxidation of tyrosine. In terms of processing, proteolytic processing by a furin-like protease causes removal of N-terminal propeptide resulting in an enzyme largely inactive, but further proteolytic processing by BMP1 results in enzyme activation.

The protein localises to the secreted. Its subcellular location is the extracellular space. The protein resides in the extracellular matrix. The catalysed reaction is L-lysyl-[protein] + O2 + H2O = (S)-2-amino-6-oxohexanoyl-[protein] + H2O2 + NH4(+). Its function is as follows. Catalyzes the oxidative deamination of lysine and hydroxylysine residues in collagen and elastin, resulting in the formation of covalent cross-linkages, and the stabilization of collagen and elastin fibers. Essential for the elastic fiber homeostasis and for their maintenance at adult age. In Bos taurus (Bovine), this protein is Lysyl oxidase homolog 1 (LOXL1).